Consider the following 217-residue polypeptide: Oxygen regulatory protein NreC (217 aa).

One can recognise a Response regulatory domain in the interval 2-119 (KIVIADDHAV…QLISAVRTVY (118 aa)). Asp-53 is modified (4-aspartylphosphate). The region spanning 148 to 213 (TNDPFRILSK…ELVEYALKKK (66 aa)) is the HTH luxR-type domain. Residues 172-191 (NKEIAEKLFVSVKTVEAHKT) constitute a DNA-binding region (H-T-H motif).

Post-translationally, phosphorylated by NreB.

It is found in the cytoplasm. Functionally, member of the two-component regulatory system NreB/NreC involved in the control of dissimilatory nitrate/nitrite reduction in response to oxygen. Phosphorylated NreC binds to a GC-rich palindromic sequence at the promoters of the nitrate (narGHJI) and nitrite (nir) reductase operons, as well as the putative nitrate transporter gene narT, and activates their expression. The chain is Oxygen regulatory protein NreC (nreC) from Staphylococcus carnosus (strain TM300).